The primary structure comprises 109 residues: Stress-response A/B barrel domain-containing protein HS1 (109 aa).

Residues 8–102 enclose the Stress-response A/B barrel domain; that stretch reads VKHVLLASFK…SLDKVLVIDY (95 aa). Mg(2+) is bound by residues Val36, Ile39, Glu40, and Met42.

In terms of assembly, homodimer. Mg(2+) is required as a cofactor.

Heat stable protein involved in defense against fungal pathogens. Possesses antifungal activity against diverse pathogenic fungi. Possesses antimicrobial activity. Possesses ribonuclease activity. This chain is Stress-response A/B barrel domain-containing protein HS1, found in Arabidopsis thaliana (Mouse-ear cress).